A 247-amino-acid polypeptide reads, in one-letter code: 5-oxoprolinase subunit A 1 (247 aa).

It belongs to the LamB/PxpA family. Forms a complex composed of PxpA, PxpB and PxpC.

The catalysed reaction is 5-oxo-L-proline + ATP + 2 H2O = L-glutamate + ADP + phosphate + H(+). Its function is as follows. Catalyzes the cleavage of 5-oxoproline to form L-glutamate coupled to the hydrolysis of ATP to ADP and inorganic phosphate. The sequence is that of 5-oxoprolinase subunit A 1 from Ralstonia nicotianae (strain ATCC BAA-1114 / GMI1000) (Ralstonia solanacearum).